The sequence spans 692 residues: Elongation factor G (692 aa).

The region spanning 8–282 (KDTRNIGIMA…AVLDYLPSPL (275 aa)) is the tr-type G domain. Residues 17-24 (AHIDAGKT), 81-85 (DTPGH), and 135-138 (NKMD) contribute to the GTP site.

Belongs to the TRAFAC class translation factor GTPase superfamily. Classic translation factor GTPase family. EF-G/EF-2 subfamily.

It localises to the cytoplasm. Catalyzes the GTP-dependent ribosomal translocation step during translation elongation. During this step, the ribosome changes from the pre-translocational (PRE) to the post-translocational (POST) state as the newly formed A-site-bound peptidyl-tRNA and P-site-bound deacylated tRNA move to the P and E sites, respectively. Catalyzes the coordinated movement of the two tRNA molecules, the mRNA and conformational changes in the ribosome. This Shouchella clausii (strain KSM-K16) (Alkalihalobacillus clausii) protein is Elongation factor G.